Reading from the N-terminus, the 628-residue chain is MKGQETRGFQSEVKQLLHLMIHSLYSNKEIFLRELISNASDAADKLRFRALSQPDLYEGDGELRVRLSCDKEKRTLTFSDNGIGMRREEVIDNLGTIAKSGTKAFLESMGSDQLKDSQLIGQFGVGFYSAFIVADKVTVRTRAAGAKPDGGVFWESAGEGDYTIADITKPERGTEITLHLREGEDDFLDDWRLKSVIGKYSDHIVLPVEIETRSKSEEEGSDEEVVTWEKINKAQALWTRNKADISDDEYKEFYKHLSHDFSEPLSWSHNRVEGKQEYTSLLYIPAKAPWDMWNREHKHGLKLYVQRVFIMDDAEQFMPNYLRFVKGLIDSNDLPLNVSREILQDSRVTQNLKGALTKRALSMLEKLAKDDAQQYQSFWQEFGLVLKEGAGEDPTNGEAVAKLLRFASTHGDSPAQTVSLEEYVGRMVEGQEKIYYITADSYAAAKSSPHLELLRKKGIEVLLFSDRIDEWMMSYLTEFDGKAFQSVSKADPSLDKLADEEDEEQKEVEKALEPFVERVKTYLGERVKEVRLTHRLTDTPAVVTTDADDMTTQMAKLFAAAGQAAPEIKYIFELNPDHALVKRTANLGDDGAFGDWVELLLDQALLAERGTLDDPNQFIRRMNQLLNA.

An a; substrate-binding region spans residues 1-340 (MKGQETRGFQ…SNDLPLNVSR (340 aa)). The interval 341-556 (EILQDSRVTQ…ADDMTTQMAK (216 aa)) is b. The segment at 557 to 628 (LFAAAGQAAP…IRRMNQLLNA (72 aa)) is c.

It belongs to the heat shock protein 90 family. Homodimer.

It localises to the cytoplasm. Its function is as follows. Molecular chaperone. Has ATPase activity. The polypeptide is Chaperone protein HtpG (Sodalis glossinidius (strain morsitans)).